We begin with the raw amino-acid sequence, 375 residues long: Anhydro-N-acetylmuramic acid kinase (375 aa).

ATP is bound at residue 13–20; that stretch reads GTSMDGVD.

It belongs to the anhydro-N-acetylmuramic acid kinase family.

It carries out the reaction 1,6-anhydro-N-acetyl-beta-muramate + ATP + H2O = N-acetyl-D-muramate 6-phosphate + ADP + H(+). It participates in amino-sugar metabolism; 1,6-anhydro-N-acetylmuramate degradation. The protein operates within cell wall biogenesis; peptidoglycan recycling. In terms of biological role, catalyzes the specific phosphorylation of 1,6-anhydro-N-acetylmuramic acid (anhMurNAc) with the simultaneous cleavage of the 1,6-anhydro ring, generating MurNAc-6-P. Is required for the utilization of anhMurNAc either imported from the medium or derived from its own cell wall murein, and thus plays a role in cell wall recycling. The sequence is that of Anhydro-N-acetylmuramic acid kinase from Pelagibacter ubique (strain HTCC1062).